Here is a 106-residue protein sequence, read N- to C-terminus: MNHFISGIPIHYYLILAMIIFTIGVAGVMVRRSAVLIFMSVELILNSVNLVFVTFSKALHQIDGEVVVFFVMAIAAAEAAIGLAIVIAIHRIKKTSYVDEMNLMKW.

Transmembrane regions (helical) follow at residues 10 to 30, 35 to 55, and 67 to 87; these read IHYY…GVMV, VLIF…FVTF, and VVFF…AIVI.

This sequence belongs to the complex I subunit 4L family. As to quaternary structure, NDH-1 is composed of 14 different subunits. Subunits NuoA, H, J, K, L, M, N constitute the membrane sector of the complex.

It localises to the cell inner membrane. It carries out the reaction a quinone + NADH + 5 H(+)(in) = a quinol + NAD(+) + 4 H(+)(out). Its function is as follows. NDH-1 shuttles electrons from NADH, via FMN and iron-sulfur (Fe-S) centers, to quinones in the respiratory chain. The immediate electron acceptor for the enzyme in this species is believed to be ubiquinone. Couples the redox reaction to proton translocation (for every two electrons transferred, four hydrogen ions are translocated across the cytoplasmic membrane), and thus conserves the redox energy in a proton gradient. This Leptospira interrogans serogroup Icterohaemorrhagiae serovar copenhageni (strain Fiocruz L1-130) protein is NADH-quinone oxidoreductase subunit K.